Consider the following 291-residue polypeptide: ATP synthase gamma chain (291 aa).

The protein belongs to the ATPase gamma chain family. In terms of assembly, F-type ATPases have 2 components, CF(1) - the catalytic core - and CF(0) - the membrane proton channel. CF(1) has five subunits: alpha(3), beta(3), gamma(1), delta(1), epsilon(1). CF(0) has three main subunits: a, b and c.

It localises to the cell membrane. In terms of biological role, produces ATP from ADP in the presence of a proton gradient across the membrane. The gamma chain is believed to be important in regulating ATPase activity and the flow of protons through the CF(0) complex. The polypeptide is ATP synthase gamma chain (Buchnera aphidicola subsp. Schizaphis graminum (strain Sg)).